A 621-amino-acid chain; its full sequence is UvrABC system protein C (621 aa).

Residues 13-92 (EKPGVYMMRN…IKENRPKYNV (80 aa)) enclose the GIY-YIG domain. Residues 205 to 240 (DELVRKIEEKMKAAAISMDFENAARYRDQIIALNNI) form the UVR domain.

Belongs to the UvrC family. In terms of assembly, interacts with UvrB in an incision complex.

It localises to the cytoplasm. Functionally, the UvrABC repair system catalyzes the recognition and processing of DNA lesions. UvrC both incises the 5' and 3' sides of the lesion. The N-terminal half is responsible for the 3' incision and the C-terminal half is responsible for the 5' incision. The chain is UvrABC system protein C from Alkaliphilus oremlandii (strain OhILAs) (Clostridium oremlandii (strain OhILAs)).